A 461-amino-acid polypeptide reads, in one-letter code: Cysteine--tRNA ligase (461 aa).

Cys-28 contributes to the Zn(2+) binding site. The 'HIGH' region motif lies at 30 to 40 (ITIYDLCHIGH). The Zn(2+) site is built by Cys-209, His-234, and Glu-238. Residues 266-270 (KMSKS) carry the 'KMSKS' region motif. An ATP-binding site is contributed by Lys-269.

It belongs to the class-I aminoacyl-tRNA synthetase family. In terms of assembly, monomer. It depends on Zn(2+) as a cofactor.

Its subcellular location is the cytoplasm. The enzyme catalyses tRNA(Cys) + L-cysteine + ATP = L-cysteinyl-tRNA(Cys) + AMP + diphosphate. The polypeptide is Cysteine--tRNA ligase (Yersinia enterocolitica serotype O:8 / biotype 1B (strain NCTC 13174 / 8081)).